Reading from the N-terminus, the 326-residue chain is o-succinylbenzoate synthase (326 aa).

Catalysis depends on Lys110, which acts as the Proton donor. 3 residues coordinate Mg(2+): Asp138, Glu165, and Asp188. The Proton acceptor role is filled by Lys212.

This sequence belongs to the mandelate racemase/muconate lactonizing enzyme family. MenC type 1 subfamily. The cofactor is a divalent metal cation.

The enzyme catalyses (1R,6R)-6-hydroxy-2-succinyl-cyclohexa-2,4-diene-1-carboxylate = 2-succinylbenzoate + H2O. The protein operates within quinol/quinone metabolism; 1,4-dihydroxy-2-naphthoate biosynthesis; 1,4-dihydroxy-2-naphthoate from chorismate: step 4/7. It participates in quinol/quinone metabolism; menaquinone biosynthesis. In terms of biological role, converts 2-succinyl-6-hydroxy-2,4-cyclohexadiene-1-carboxylate (SHCHC) to 2-succinylbenzoate (OSB). The chain is o-succinylbenzoate synthase from Mycobacterium bovis (strain ATCC BAA-935 / AF2122/97).